We begin with the raw amino-acid sequence, 232 residues long: Small ribosomal subunit protein uS3 (232 aa).

The region spanning 39–107 is the KH type-2 domain; sequence VRQFLTKELA…PAQINIAEVR (69 aa).

This sequence belongs to the universal ribosomal protein uS3 family. In terms of assembly, part of the 30S ribosomal subunit. Forms a tight complex with proteins S10 and S14.

Its function is as follows. Binds the lower part of the 30S subunit head. Binds mRNA in the 70S ribosome, positioning it for translation. This Yersinia pseudotuberculosis serotype O:1b (strain IP 31758) protein is Small ribosomal subunit protein uS3.